Consider the following 500-residue polypeptide: NAD(P)H-quinone oxidoreductase chain 4, chloroplastic (500 aa).

Helical transmembrane passes span 4–24 (FPWL…IFLL), 37–57 (LCIC…HFQL), 87–107 (IGPI…AWPV), 111–131 (AQLF…SFSS), 134–154 (LLLF…LLSM), 167–187 (FILY…GIGL), 208–228 (ALEV…LPII), 242–262 (HYST…YGLV), 272–292 (AHCL…IYAA), 305–325 (IAYS…SLSD), 330–350 (GAIL…FLAG), 386–406 (LALP…GIIT), 416–436 (ILIA…SLSM), and 462–482 (LFVS…PDFV).

It belongs to the complex I subunit 4 family.

The protein resides in the plastid. It localises to the chloroplast thylakoid membrane. It carries out the reaction a plastoquinone + NADH + (n+1) H(+)(in) = a plastoquinol + NAD(+) + n H(+)(out). The enzyme catalyses a plastoquinone + NADPH + (n+1) H(+)(in) = a plastoquinol + NADP(+) + n H(+)(out). The chain is NAD(P)H-quinone oxidoreductase chain 4, chloroplastic from Oenothera biennis (German evening primrose).